Consider the following 359-residue polypeptide: Acidic skeletal organic matrix protein (359 aa).

The first 26 residues, 1-26 (MLAPRLAFVLLLSSYFGSILITSVES), serve as a signal peptide directing secretion. Disordered stretches follow at residues 60–83 (FEEDDDDDDDEDNEESENEVEDFD) and 224–254 (SEAEDPEEVDDAKRAETGKDPICVDPDDPNE). Residues 66-89 (DDDDEDNEESENEVEDFDDENALS) are a coiled coil.

Component of the acid-insoluble and acid-soluble organic matrix of the aragonitic skeleton (at protein level).

It localises to the secreted. The polypeptide is Acidic skeletal organic matrix protein (Acropora millepora (Staghorn coral)).